A 247-amino-acid polypeptide reads, in one-letter code: ATP synthase subunit a, chloroplastic (247 aa).

5 helical membrane-spanning segments follow: residues 38–58 (QVLI…IVTV), 95–115 (VPFI…GALL), 134–154 (INTT…AGLS), 199–219 (LVVV…VMFL), and 220–240 (GLFT…AYIG).

It belongs to the ATPase A chain family. In terms of assembly, F-type ATPases have 2 components, CF(1) - the catalytic core - and CF(0) - the membrane proton channel. CF(1) has five subunits: alpha(3), beta(3), gamma(1), delta(1), epsilon(1). CF(0) has four main subunits: a, b, b' and c.

Its subcellular location is the plastid. The protein resides in the chloroplast thylakoid membrane. Key component of the proton channel; it plays a direct role in the translocation of protons across the membrane. The sequence is that of ATP synthase subunit a, chloroplastic from Populus trichocarpa (Western balsam poplar).